The chain runs to 140 residues: Methylglyoxal synthase (140 aa).

Positions 1 to 140 constitute an MGS-like domain; sequence MRSKPRIALI…DQAAADDAAP (140 aa). Residues His12, Lys16, 38-41, and 58-59 contribute to the substrate site; these read TGTT and SG. Asp64 functions as the Proton donor/acceptor in the catalytic mechanism. Position 91 (His91) interacts with substrate.

Belongs to the methylglyoxal synthase family.

The enzyme catalyses dihydroxyacetone phosphate = methylglyoxal + phosphate. Catalyzes the formation of methylglyoxal from dihydroxyacetone phosphate. The sequence is that of Methylglyoxal synthase from Cupriavidus metallidurans (strain ATCC 43123 / DSM 2839 / NBRC 102507 / CH34) (Ralstonia metallidurans).